The following is a 278-amino-acid chain: Envelope glycoprotein L (278 aa).

Residues 1 to 30 form the signal peptide; sequence MCRRPDCGFSFSPGPVILLWCCLLLPIVSS. The region spanning 43 to 256 is the gL betaherpesvirus-type domain; it reads VPAECPELTR…DKYYAGLPPE (214 aa). An intrachain disulfide couples Cys-154 to Cys-159.

The protein belongs to the herpesviridae glycoprotein L (gL) family. Betaherpesvirinae gL subfamily. Interacts with glycoprotein H (gH); this interaction is necessary for the correct processing and cell surface expression of gH. Forms the envelope pentamer complex (PC) composed of gH, gL, UL128, UL130, and UL131A. The pentamer interacts with host NRP2. Forms the envelope trimer complex composed of gH, gL, and gO. The trimer interacts with host PDGFRA.

The protein resides in the virion membrane. The protein localises to the host cell membrane. Its subcellular location is the host Golgi apparatus. It is found in the host trans-Golgi network. The heterodimer glycoprotein H-glycoprotein L is required for the fusion of viral and plasma membranes leading to virus entry into the host cell. Acts as a functional inhibitor of gH and maintains gH in an inhibited form. Upon binding to host integrins, gL dissociates from gH leading to activation of the viral fusion glycoproteins gB and gH. In human cytomegalovirus, forms two distincts complexes to mediate viral entry, a trimer and a pentamer at the surface of the virion envelope. The gH-gL-gO trimer is required for infection in fibroblasts by interacting with host PDGFRA. The gH-gL-UL128-UL130-UL131A pentamer is essential for viral entry in epithelial, endothelial and myeloid cells via interaction with host NRP2. The polypeptide is Envelope glycoprotein L (Human cytomegalovirus (strain PT) (HHV-5)).